An 89-amino-acid polypeptide reads, in one-letter code: Small ribosomal subunit protein uS15 (89 aa).

The protein belongs to the universal ribosomal protein uS15 family. Part of the 30S ribosomal subunit. Forms a bridge to the 50S subunit in the 70S ribosome, contacting the 23S rRNA.

Functionally, one of the primary rRNA binding proteins, it binds directly to 16S rRNA where it helps nucleate assembly of the platform of the 30S subunit by binding and bridging several RNA helices of the 16S rRNA. Forms an intersubunit bridge (bridge B4) with the 23S rRNA of the 50S subunit in the ribosome. The polypeptide is Small ribosomal subunit protein uS15 (Prochlorococcus marinus (strain MIT 9312)).